The following is a 620-amino-acid chain: 1-deoxy-D-xylulose-5-phosphate synthase (620 aa).

Residues histidine 80 and 121 to 123 (GHS) each bind thiamine diphosphate. Aspartate 152 is a binding site for Mg(2+). Residues 153–154 (GA), asparagine 181, tyrosine 288, and glutamate 370 contribute to the thiamine diphosphate site. Residue asparagine 181 coordinates Mg(2+).

This sequence belongs to the transketolase family. DXPS subfamily. Homodimer. Mg(2+) serves as cofactor. Requires thiamine diphosphate as cofactor.

It catalyses the reaction D-glyceraldehyde 3-phosphate + pyruvate + H(+) = 1-deoxy-D-xylulose 5-phosphate + CO2. It participates in metabolic intermediate biosynthesis; 1-deoxy-D-xylulose 5-phosphate biosynthesis; 1-deoxy-D-xylulose 5-phosphate from D-glyceraldehyde 3-phosphate and pyruvate: step 1/1. Functionally, catalyzes the acyloin condensation reaction between C atoms 2 and 3 of pyruvate and glyceraldehyde 3-phosphate to yield 1-deoxy-D-xylulose-5-phosphate (DXP). This chain is 1-deoxy-D-xylulose-5-phosphate synthase, found in Salmonella typhi.